Here is a 59-residue protein sequence, read N- to C-terminus: Large ribosomal subunit protein uL30 (59 aa).

This sequence belongs to the universal ribosomal protein uL30 family. As to quaternary structure, part of the 50S ribosomal subunit.

This Herminiimonas arsenicoxydans protein is Large ribosomal subunit protein uL30.